The chain runs to 127 residues: Translation initiation factor 5A (127 aa).

The residue at position 35 (Lys35) is a Hypusine.

Belongs to the eIF-5A family.

It localises to the cytoplasm. Functionally, functions by promoting the formation of the first peptide bond. The chain is Translation initiation factor 5A from Methanococcoides burtonii (strain DSM 6242 / NBRC 107633 / OCM 468 / ACE-M).